Here is a 947-residue protein sequence, read N- to C-terminus: Cell adhesion molecule CEACAM5 (947 aa).

The N-terminal stretch at 1–34 (MEASSVLPCKWCTHLQGLLLTASFLTCCHLPTTA) is a signal peptide. 7 consecutive Ig-like V-type domains span residues 35–132 (QITI…EIVS), 166–259 (SEGG…VQLY), 270–378 (PLQV…LHVN), 392–498 (RLSI…LQLD), 509–615 (QVKI…LHVN), 642–733 (GESV…VQLQ), and 746–851 (DQLI…VQVH). N-linked (GlcNAc...) asparagine glycans are attached at residues Asn-57, Asn-103, Asn-110, Asn-207, Asn-224, Asn-341, Asn-461, Asn-472, Asn-578, Asn-698, Asn-709, Asn-816, and Asn-823. Positions 859–943 (PFVRVTDTTV…SKSSLPVRLA (85 aa)) constitute an Ig-like C2-type 1 domain. A disulfide bridge connects residues Cys-878 and Cys-926.

This sequence belongs to the immunoglobulin superfamily. CEA family. As to quaternary structure, homodimer.

It is found in the cell membrane. The protein localises to the apical cell membrane. The protein resides in the cell surface. Cell surface glycoprotein that plays a role in cell adhesion, intracellular signaling and tumor progression. Mediates homophilic and heterophilic cell adhesion with other carcinoembryonic antigen-related cell adhesion molecules, such as CEACAM6. Plays a role as an oncogene by promoting tumor progression; induces resistance to anoikis of colorectal carcinoma cells. The sequence is that of Cell adhesion molecule CEACAM5 from Mus musculus (Mouse).